We begin with the raw amino-acid sequence, 942 residues long: VPS35 endosomal protein sorting factor-like (942 aa).

The protein belongs to the VPS35L family. As to quaternary structure, component of the heterotrimeric retriever complex.

Its subcellular location is the endosome. Its function is as follows. Acts as a component of the retriever complex. The retriever complex is a heterotrimeric complex related to retromer cargo-selective complex (CSC) and essential for retromer-independent retrieval and recycling of numerous cargos. This chain is VPS35 endosomal protein sorting factor-like, found in Drosophila melanogaster (Fruit fly).